We begin with the raw amino-acid sequence, 871 residues long: Alanine--tRNA ligase (871 aa).

Zn(2+) contacts are provided by H561, H565, C665, and H669.

This sequence belongs to the class-II aminoacyl-tRNA synthetase family. The cofactor is Zn(2+).

It localises to the cytoplasm. It catalyses the reaction tRNA(Ala) + L-alanine + ATP = L-alanyl-tRNA(Ala) + AMP + diphosphate. Catalyzes the attachment of alanine to tRNA(Ala) in a two-step reaction: alanine is first activated by ATP to form Ala-AMP and then transferred to the acceptor end of tRNA(Ala). Also edits incorrectly charged Ser-tRNA(Ala) and Gly-tRNA(Ala) via its editing domain. In Dehalococcoides mccartyi (strain CBDB1), this protein is Alanine--tRNA ligase.